The primary structure comprises 200 residues: dITP/XTP pyrophosphatase (200 aa).

Residue 8-13 (TGNQGK) participates in substrate binding. D69 acts as the Proton acceptor in catalysis. Residue D69 participates in Mg(2+) binding. Substrate contacts are provided by residues S70, 154 to 157 (FGYD), K177, and 182 to 183 (HR).

Belongs to the HAM1 NTPase family. In terms of assembly, homodimer. The cofactor is Mg(2+).

The enzyme catalyses XTP + H2O = XMP + diphosphate + H(+). It carries out the reaction dITP + H2O = dIMP + diphosphate + H(+). The catalysed reaction is ITP + H2O = IMP + diphosphate + H(+). Its function is as follows. Pyrophosphatase that catalyzes the hydrolysis of nucleoside triphosphates to their monophosphate derivatives, with a high preference for the non-canonical purine nucleotides XTP (xanthosine triphosphate), dITP (deoxyinosine triphosphate) and ITP. Seems to function as a house-cleaning enzyme that removes non-canonical purine nucleotides from the nucleotide pool, thus preventing their incorporation into DNA/RNA and avoiding chromosomal lesions. This Vibrio cholerae serotype O1 (strain ATCC 39315 / El Tor Inaba N16961) protein is dITP/XTP pyrophosphatase.